The primary structure comprises 537 residues: Beta-galactoside alpha-2,6-sialyltransferase 2 (537 aa).

Residues 1 to 10 (MKSWVRQGRR) are Cytoplasmic-facing. A helical; Signal-anchor for type II membrane protein membrane pass occupies residues 11–31 (LVLVGMLAWVLLFLALLSYFL). Residues 32-537 (DARVNEPLTS…PGFSTVDCDI (506 aa)) are Lumenal-facing. 2 disordered regions span residues 83–117 (TRDE…PEGI) and 134–202 (GTEN…GDSS). Over residues 134-145 (GTENIGSQSDPV) the composition is skewed to polar residues. Over residues 166-185 (EEEEEEEEEEERQENEDEDV) the composition is skewed to acidic residues. Disulfide bonds link Cys-265–Cys-535, Cys-312–Cys-464, and Cys-482–Cys-493. N-linked (GlcNAc...) asparagine glycosylation is found at Asn-353 and Asn-373.

This sequence belongs to the glycosyltransferase 29 family.

The protein resides in the golgi apparatus. It localises to the golgi stack membrane. The enzyme catalyses a beta-D-galactoside + CMP-N-acetyl-beta-neuraminate = an N-acetyl-alpha-neuraminyl-(2-&gt;6)-beta-D-galactosyl derivative + CMP + H(+). Transfers sialic acid from the donor of substrate CMP-sialic acid to galactose containing acceptor substrates. The sequence is that of Beta-galactoside alpha-2,6-sialyltransferase 2 (st6gal2) from Takifugu rubripes (Japanese pufferfish).